Consider the following 419-residue polypeptide: MTATPREFDIVLYGATGFVGKLTAEYLARAGGDARIALAGRSTQRVLAVREALGESAQTWPILTADASLPSTLQAMAARAQVVVTTVGPYTRYGLPLVAACAAAGTDYADLTGEPMFMRNSIDLYHKQAADTGARIVHACGFDSVPSDLSVYALYHAAREDGAGELTDTNCVVRSFKGGFSGGTIASMLEVLSTASNDPDARRQLSDPYMLSPDRGAEPELGPQPDLPSRRGRRLAPELAGVWTAGFIMAPTNTRIVRRSNALLDWAYGRRFRYSETMSVGSTVLAPVVSVVGGGVGNAMFGLASRYIRLLPRGLVKRVVPKPGTGPSAAARERGYYRIETYTTTTTGARYLARMAQDGDPGYKATSVLLGECGLALALDRDKLSDMRGVLTPAAAMGDALLERLPAAGVSLQTTRLAS.

An Isoglutamyl lysine isopeptide (Lys-Gln) (interchain with Q-Cter in protein Pup) cross-link involves residue Lys-127. Residues 197–232 (NDPDARRQLSDPYMLSPDRGAEPELGPQPDLPSRRG) are disordered. Residues 284 to 304 (VLAPVVSVVGGGVGNAMFGLA) traverse the membrane as a helical segment.

The protein belongs to the saccharopine dehydrogenase family. Enoyl reductase subfamily.

It is found in the cell membrane. The protein is Putative trans-acting enoyl reductase MT2525 of Mycobacterium tuberculosis (strain CDC 1551 / Oshkosh).